A 517-amino-acid polypeptide reads, in one-letter code: Sphingolipid C9-methyltransferase A (517 aa).

The next 2 helical transmembrane spans lie at 58–78 and 80–100; these read LLILLLVVIPWYTARQIGGGL and TTIFFAIFTTIPILMAFWSIA. S-adenosyl-L-methionine is bound by residues 223 to 224, 286 to 291, and 316 to 317; these read YT, TLGRNQ, and YR. Asn-290 carries N-linked (GlcNAc...) asparagine glycosylation. N-linked (GlcNAc...) asparagine glycosylation occurs at Asn-478.

The protein belongs to the CFA/CMAS family.

The protein resides in the membrane. It carries out the reaction a (4E,8E)-4-sphinga-4,8-dienine ceramide + S-adenosyl-L-methionine = a 9-methyl-(4E,8E)-sphinga-4,8-dienine ceramide + S-adenosyl-L-homocysteine + H(+). Its pathway is lipid metabolism; sphingolipid metabolism. Functionally, catalyzes methylation of the sphingoid base component of glucosylceramides (GluCers) at the C9-position. Sphingolipid C9-methylation requires 4,8-desaturated ceramides as substrates. Glucosylceramides play important roles in growth, differentiation and pathogenicity. The methyl group at the C9-position distinguishes fungal glucosylceramides from those of plants and animals and may thus play a role in host-pathogen interactions enabling the host to recognize the fungal attack and initiate specific defense responses. This Emericella nidulans (strain FGSC A4 / ATCC 38163 / CBS 112.46 / NRRL 194 / M139) (Aspergillus nidulans) protein is Sphingolipid C9-methyltransferase A.